The following is a 240-amino-acid chain: Lipoprotein-releasing system ATP-binding protein LolD (240 aa).

The ABC transporter domain maps to Ile-15–Val-240. Gly-51 to Ser-58 is an ATP binding site.

This sequence belongs to the ABC transporter superfamily. Lipoprotein translocase (TC 3.A.1.125) family. As to quaternary structure, the complex is composed of two ATP-binding proteins (LolD) and two transmembrane proteins (LolC and LolE).

The protein resides in the cell inner membrane. Its function is as follows. Part of the ABC transporter complex LolCDE involved in the translocation of mature outer membrane-directed lipoproteins, from the inner membrane to the periplasmic chaperone, LolA. Responsible for the formation of the LolA-lipoprotein complex in an ATP-dependent manner. The sequence is that of Lipoprotein-releasing system ATP-binding protein LolD from Xylella fastidiosa (strain Temecula1 / ATCC 700964).